The sequence spans 148 residues: Arginine repressor (148 aa).

Belongs to the ArgR family.

The protein resides in the cytoplasm. It participates in amino-acid biosynthesis; L-arginine biosynthesis [regulation]. Its function is as follows. Regulates arginine biosynthesis genes. This chain is Arginine repressor, found in Chlorobium phaeobacteroides (strain BS1).